We begin with the raw amino-acid sequence, 284 residues long: Co-chaperone protein DjlA (284 aa).

At 1–6 the chain is on the periplasmic side; it reads MHIFGK. The helical transmembrane segment at 7 to 30 threads the bilayer; sequence ILGAFFGFLFGGPFGAIFGIFLGH. The Cytoplasmic segment spans residues 31 to 284; sequence QFDKARRLNQ…ELIRKEKGIK (254 aa). Residues 190–211 are disordered; the sequence is QGGGFGGSQQQSHSGQQWQQPS. Residues 197 to 211 are compositionally biased toward low complexity; it reads SQQQSHSGQQWQQPS. The J domain occupies 218–284; that stretch reads DAYEVLGVSE…ELIRKEKGIK (67 aa).

Homodimer.

It is found in the cell inner membrane. Its function is as follows. Regulatory DnaK co-chaperone. Direct interaction between DnaK and DjlA is needed for the induction of the wcaABCDE operon, involved in the synthesis of a colanic acid polysaccharide capsule, possibly through activation of the RcsB/RcsC phosphotransfer signaling pathway. The colanic acid capsule may help the bacterium survive conditions outside the host. The polypeptide is Co-chaperone protein DjlA (Vibrio cholerae serotype O1 (strain ATCC 39315 / El Tor Inaba N16961)).